A 338-amino-acid polypeptide reads, in one-letter code: tRNA (cytidine(56)-2'-O)-methyltransferase (338 aa).

S-adenosyl-L-methionine contacts are provided by residues L79 and 105-109 (GSEKV). The HD domain maps to 188 to 295 (LINHVKSVKE…VAHADNLFAG (108 aa)).

Belongs to the aTrm56 family. Homodimer.

It is found in the cytoplasm. The catalysed reaction is cytidine(56) in tRNA + S-adenosyl-L-methionine = 2'-O-methylcytidine(56) in tRNA + S-adenosyl-L-homocysteine + H(+). Functionally, specifically catalyzes the AdoMet-dependent 2'-O-ribose methylation of cytidine at position 56 in tRNAs. This Thermoplasma volcanium (strain ATCC 51530 / DSM 4299 / JCM 9571 / NBRC 15438 / GSS1) protein is tRNA (cytidine(56)-2'-O)-methyltransferase.